The sequence spans 205 residues: UPF0688 protein C1orf174 homolog (205 aa).

Over residues 1–18 (MRKRKLSDRVRCSARLKN) the composition is skewed to basic residues. Disordered regions lie at residues 1 to 128 (MRKR…PSKV) and 184 to 205 (AKEE…EGNI). A compositionally biased stretch (basic and acidic residues) spans 46–63 (NTDKKSPKKLENDEKGLM). Over residues 71-108 (INKTDNTASNESNAGNVNTCPSASPFSDLNEVSRNGLT) the composition is skewed to polar residues. Residues 187 to 196 (EEEDDDDDYA) show a composition bias toward acidic residues.

It belongs to the UPF0688 family.

Its subcellular location is the nucleus. The protein is UPF0688 protein C1orf174 homolog of Xenopus laevis (African clawed frog).